Consider the following 337-residue polypeptide: GTPase Obg (337 aa).

The Obg domain occupies 1 to 159 (MKFVDSASIF…LMLNMELKLM (159 aa)). Residues 160-323 (ADVGLVGFPN…LKDELWREVS (164 aa)) form the OBG-type G domain. GTP is bound by residues 166–173 (GFPNAGKS), 191–195 (FTTLV), 213–216 (DIPG), 280–283 (TKMD), and 304–306 (SAV). Positions 173 and 193 each coordinate Mg(2+).

It belongs to the TRAFAC class OBG-HflX-like GTPase superfamily. OBG GTPase family. As to quaternary structure, monomer. Requires Mg(2+) as cofactor.

It is found in the cytoplasm. In terms of biological role, an essential GTPase which binds GTP, GDP and possibly (p)ppGpp with moderate affinity, with high nucleotide exchange rates and a fairly low GTP hydrolysis rate. Plays a role in control of the cell cycle, stress response, ribosome biogenesis and in those bacteria that undergo differentiation, in morphogenesis control. The protein is GTPase Obg of Pelodictyon phaeoclathratiforme (strain DSM 5477 / BU-1).